A 596-amino-acid polypeptide reads, in one-letter code: ATP-dependent RNA helicase dbp3 (596 aa).

Basic and acidic residues predominate over residues 1-17 (MPKRTLEDTELNPRDNY). Disordered regions lie at residues 1 to 87 (MPKR…ESTS) and 115 to 139 (EEKVDIPESTDSATPISVAPQQNGT). Over residues 21-30 (SSKKSRKEKR) the composition is skewed to basic residues. The stretch at 47-120 (IDIEVESKEA…KEGKEEKVDI (74 aa)) forms a coiled coil. The span at 123 to 139 (STDSATPISVAPQQNGT) shows a compositional bias: polar residues. The short motif at 180–207 (IKFDYLPITDSAQRAPFKDFKAPTPIQA) is the Q motif element. Positions 210-386 (WPFLLAGRDV…STFMTSPVKI (177 aa)) constitute a Helicase ATP-binding domain. 223-230 (AETGSGKT) serves as a coordination point for ATP. Residues 332 to 335 (DEAD) carry the DEAD box motif. The region spanning 417–566 (RLMQLLKQYQ…PVPDELLKFG (150 aa)) is the Helicase C-terminal domain.

It belongs to the DEAD box helicase family. DDX5/DBP2 subfamily.

The protein localises to the nucleus. It is found in the nucleolus. It catalyses the reaction ATP + H2O = ADP + phosphate + H(+). ATP-dependent RNA helicase required for 60S ribosomal subunit synthesis. Involved in efficient pre-rRNA processing, predominantly at site A3, which is necessary for the normal formation of 25S and 5.8S rRNAs. This is ATP-dependent RNA helicase dbp3 (dbp3) from Sclerotinia sclerotiorum (strain ATCC 18683 / 1980 / Ss-1) (White mold).